Here is a 386-residue protein sequence, read N- to C-terminus: Probable mannan endo-1,4-beta-mannosidase A (386 aa).

An N-terminal signal peptide occupies residues 1-21 (MKLNPSLLTAAGLVSAQLASA). 2 residues coordinate substrate: tryptophan 95 and asparagine 207. Catalysis depends on glutamate 208, which acts as the Proton donor. Residue tyrosine 283 coordinates substrate. The active-site Nucleophile is glutamate 316. Asparagine 336 carries N-linked (GlcNAc...) asparagine glycosylation. Tryptophan 346 is a substrate binding site.

This sequence belongs to the glycosyl hydrolase 5 (cellulase A) family.

The protein localises to the secreted. It carries out the reaction Random hydrolysis of (1-&gt;4)-beta-D-mannosidic linkages in mannans, galactomannans and glucomannans.. Functionally, endo-1,4-mannanase, a crucial enzyme for depolymerization of seed galactomannans and wood galactoglucomannans. The polypeptide is Probable mannan endo-1,4-beta-mannosidase A (manA) (Aspergillus flavus (strain ATCC 200026 / FGSC A1120 / IAM 13836 / NRRL 3357 / JCM 12722 / SRRC 167)).